The primary structure comprises 152 residues: Transcriptional regulator MraZ (152 aa).

SpoVT-AbrB domains are found at residues 5-52 (ATLV…PLPE) and 81-124 (ASEC…DETT).

This sequence belongs to the MraZ family. As to quaternary structure, forms oligomers.

The protein resides in the cytoplasm. It is found in the nucleoid. In terms of biological role, negatively regulates its own expression and that of the subsequent genes in the proximal part of the division and cell wall (dcw) gene cluster. Acts by binding directly to DNA. May also regulate the expression of genes outside the dcw cluster. The chain is Transcriptional regulator MraZ from Citrobacter koseri (strain ATCC BAA-895 / CDC 4225-83 / SGSC4696).